The primary structure comprises 153 residues: UPF0266 membrane protein SG1324 (153 aa).

A run of 3 helical transmembrane segments spans residues 6–26 (IGLV…EFIV), 46–66 (LDGL…ITTD), and 68–88 (KVMT…LAYI).

It belongs to the UPF0266 family.

The protein localises to the cell inner membrane. This is UPF0266 membrane protein SG1324 from Sodalis glossinidius (strain morsitans).